Reading from the N-terminus, the 731-residue chain is Catalase-peroxidase (731 aa).

The tryptophyl-tyrosyl-methioninium (Trp-Tyr) (with M-252) cross-link spans 98–226 (WHAAGTYRTA…LAAVQMGLIY (129 aa)). His99 serves as the catalytic Proton acceptor. A cross-link (tryptophyl-tyrosyl-methioninium (Tyr-Met) (with W-98)) is located at residues 226–252 (YVNPEGPDGNPDIVASGHDVIETFGRM). His267 is a binding site for heme b.

This sequence belongs to the peroxidase family. Peroxidase/catalase subfamily. Homodimer or homotetramer. Heme b serves as cofactor. Formation of the three residue Trp-Tyr-Met cross-link is important for the catalase, but not the peroxidase activity of the enzyme.

It catalyses the reaction H2O2 + AH2 = A + 2 H2O. The enzyme catalyses 2 H2O2 = O2 + 2 H2O. Bifunctional enzyme with both catalase and broad-spectrum peroxidase activity. The protein is Catalase-peroxidase of Ruegeria pomeroyi (strain ATCC 700808 / DSM 15171 / DSS-3) (Silicibacter pomeroyi).